The chain runs to 213 residues: Large ribosomal subunit protein uL3 (213 aa).

Residues 131 to 155 form a disordered region; it reads GRASHGNSVSHRAHGSTGNNQDPGR. The segment covering 135–152 has biased composition (polar residues); it reads HGNSVSHRAHGSTGNNQD. An N5-methylglutamine modification is found at glutamine 151.

The protein belongs to the universal ribosomal protein uL3 family. Part of the 50S ribosomal subunit. Forms a cluster with proteins L14 and L19. In terms of processing, methylated by PrmB.

Functionally, one of the primary rRNA binding proteins, it binds directly near the 3'-end of the 23S rRNA, where it nucleates assembly of the 50S subunit. In Agrobacterium fabrum (strain C58 / ATCC 33970) (Agrobacterium tumefaciens (strain C58)), this protein is Large ribosomal subunit protein uL3.